The following is a 191-amino-acid chain: uncharacterized protein (191 aa).

This is an uncharacterized protein from Methanocaldococcus jannaschii (strain ATCC 43067 / DSM 2661 / JAL-1 / JCM 10045 / NBRC 100440) (Methanococcus jannaschii).